We begin with the raw amino-acid sequence, 418 residues long: Trans-acting enoyl reductase (418 aa).

It belongs to the saccharopine dehydrogenase family. Enoyl reductase subfamily.

In terms of biological role, involved in the reduction of the double bond between C-4 and C-5 during phthiocerol dimycocerosates (DIM A) and glycosylated phenolphthiocerol dimycocerosates (PGL) biosynthesis. The chain is Trans-acting enoyl reductase from Mycobacterium leprae (strain TN).